The following is a 146-amino-acid chain: 3-hydroxyacyl-[acyl-carrier-protein] dehydratase FabZ (146 aa).

Histidine 49 is a catalytic residue.

The protein belongs to the thioester dehydratase family. FabZ subfamily.

Its subcellular location is the cytoplasm. The catalysed reaction is a (3R)-hydroxyacyl-[ACP] = a (2E)-enoyl-[ACP] + H2O. Its function is as follows. Involved in unsaturated fatty acids biosynthesis. Catalyzes the dehydration of short chain beta-hydroxyacyl-ACPs and long chain saturated and unsaturated beta-hydroxyacyl-ACPs. This Pseudomonas syringae pv. tomato (strain ATCC BAA-871 / DC3000) protein is 3-hydroxyacyl-[acyl-carrier-protein] dehydratase FabZ.